The chain runs to 344 residues: MTTIAVVGATGQVGQVMRTLLEERNFPADTVRFFASPRSAGRKIEFRGTEIEVEDITQATEESLKDIDVALFSAGGTASKQYAPLFAAAGATVVDNSSAWRKDDEVPLIVSEVNPSDKDSLVKGIIANPNCTTMAAMPVLKPLHDAAGLVKLHVSSYQAVSGSGLAGVETLAKQVAAVGDHNVEFVHDGQAADAGDVGPYVSPIAYNVLPFAGNLVDDGTFETDEEQKLRNESRKILGLPDLKVSGTCVRVPVFTGHTLTIHAEFDKAITVDQAQEILGAASGVKLVDVPTPLAAAGIDESLVGRIRQDSTVDDNRGLVLVVSGDNLRKGAALNTIQIAELLVK.

Residues 10–13 and 38–39 each bind NADP(+); these read TGQV and RS. Position 101 (Arg-101) interacts with phosphate. Catalysis depends on Cys-131, which acts as the Acyl-thioester intermediate. Substrate is bound at residue Gln-158. NADP(+) is bound at residue 161 to 162; the sequence is SG. A phosphate-binding site is contributed by Lys-228. Arg-250 lines the substrate pocket. The active-site Proton acceptor is His-257. Residue Asn-326 participates in NADP(+) binding.

Belongs to the aspartate-semialdehyde dehydrogenase family. As to quaternary structure, homodimer.

It catalyses the reaction L-aspartate 4-semialdehyde + phosphate + NADP(+) = 4-phospho-L-aspartate + NADPH + H(+). Its pathway is amino-acid biosynthesis; L-lysine biosynthesis via DAP pathway; (S)-tetrahydrodipicolinate from L-aspartate: step 2/4. The protein operates within amino-acid biosynthesis; L-methionine biosynthesis via de novo pathway; L-homoserine from L-aspartate: step 2/3. It participates in amino-acid biosynthesis; L-threonine biosynthesis; L-threonine from L-aspartate: step 2/5. Catalyzes the NADPH-dependent formation of L-aspartate-semialdehyde (L-ASA) by the reductive dephosphorylation of L-aspartyl-4-phosphate. The protein is Aspartate-semialdehyde dehydrogenase of Corynebacterium glutamicum (strain ATCC 13032 / DSM 20300 / JCM 1318 / BCRC 11384 / CCUG 27702 / LMG 3730 / NBRC 12168 / NCIMB 10025 / NRRL B-2784 / 534).